We begin with the raw amino-acid sequence, 122 residues long: UPF0102 protein ECH_0093 (122 aa).

The protein belongs to the UPF0102 family.

This Ehrlichia chaffeensis (strain ATCC CRL-10679 / Arkansas) protein is UPF0102 protein ECH_0093.